The sequence spans 338 residues: Heat-inducible transcription repressor HrcA (338 aa).

Belongs to the HrcA family.

Functionally, negative regulator of class I heat shock genes (grpE-dnaK-dnaJ and groELS operons). Prevents heat-shock induction of these operons. In Bacillus cereus (strain AH820), this protein is Heat-inducible transcription repressor HrcA.